Consider the following 465-residue polypeptide: Lysosomal dipeptide transporter MFSD1 (465 aa).

The tract at residues 1–23 is disordered; it reads MEEEDEEARALLAGGPDEADRGA. The Dileucine internalization motif signature appears at 11 to 12; sequence LL. Transmembrane regions (helical) follow at residues 39–59, 83–103, 113–133, 135–155, 170–191, 213–233, 266–286, 304–324, 331–351, 361–381, 392–412, and 418–438; these read LVHR…SYFC, LLYA…GFLI, TIIF…GGIF, AFWL…SLAV, LNLV…NMNL, ITLM…LALA, LWLI…FIGL, AINS…GLLV, IIWV…LAFT, LLGL…AFVV, FMQS…GMIL, and LFLE…VVLL.

It belongs to the major facilitator superfamily. In terms of assembly, homodimer. Interacts with lysosomal protein GLMP (via lumenal domain); the interaction starts while both proteins are still in the endoplasmic reticulum and is required for stabilization of MFSD1 in lysosomes but has no direct effect on its targeting to lysosomes or transporter activity.

The protein localises to the lysosome membrane. It catalyses the reaction L-alpha-aminoacyl-L-arginine(out) = L-alpha-aminoacyl-L-arginine(in). The catalysed reaction is L-arginyl-L-alpha-amino acid(out) = L-arginyl-L-alpha-amino acid(in). The enzyme catalyses L-arginyl-glycine(out) = L-arginyl-glycine(in). It carries out the reaction L-alpha-aminoacyl-L-lysine(out) = L-alpha-aminoacyl-L-lysine(in). It catalyses the reaction L-aspartyl-L-lysine(out) = L-aspartyl-L-lysine(in). The catalysed reaction is L-alanyl-L-lysine(out) = L-alanyl-L-lysine(in). The enzyme catalyses L-lysyl-L-alpha-amino acid(out) = L-lysyl-L-alpha-amino acid(in). It carries out the reaction L-lysyl-L-alanine(out) = L-lysyl-L-alanine(in). It catalyses the reaction L-lysyl-L-lysine(out) = L-lysyl-L-lysine(in). The catalysed reaction is L-lysyl-glycine(out) = L-lysyl-glycine(in). The enzyme catalyses L-alpha-aminoacyl-L-histidine(out) = L-alpha-aminoacyl-L-histidine(in). It carries out the reaction L-histidyl-L-alpha-amino acid(out) = L-histidyl-L-alpha-amino acid(in). It catalyses the reaction L-histidyl-glycine(out) = L-histidyl-glycine(in). Lysosomal dipeptide uniporter that selectively exports lysine, arginine or histidine-containing dipeptides with a net positive charge from the lysosome lumen into the cytosol. Could play a role in a specific type of protein O-glycosylation indirectly regulating macrophages migration and tissue invasion. Also essential for liver homeostasis. This Pongo abelii (Sumatran orangutan) protein is Lysosomal dipeptide transporter MFSD1.